Here is an 84-residue protein sequence, read N- to C-terminus: CLAVATA3/ESR (CLE)-related protein 13 (84 aa).

A signal peptide spans 1 to 29; it reads MGRYTTDQVQVYVLVIVLCTFFSTLQARS. The tract at residues 57–84 is disordered; that stretch reads KQVRDISGDRLSPAGPDPQHNGRSPPRK. Hydroxyproline is present on residues P69 and P72. P72 carries O-linked (Ara...) hydroxyproline glycosylation.

The protein belongs to the CLV3/ESR signal peptide family. The O-glycosylation (arabinosylation) of the hydroxyproline Pro-72 enhances binding affinity of the CLE13p peptide for its receptor. Expressed in young nodules throughout the central tissue. Expressed in the apical region of elongated nodules, corresponding to the meristematic and early infection zones.

It is found in the secreted. It localises to the extracellular space. In terms of biological role, signaling peptide involved in the regulation of nodulation. Moves from root to shoot to function with the receptor kinase SUNN, in a signaling pathway that plays roles during cellular differentiation, both at the onset of nodulation, and later during nodule meristem development and subsequent homeostasis. Interacts with SUNN signaling to control nodule numbers. SUNN is involved in the autoregulation of nodulation (AON), a long distance systemic signaling from root to shoot and back again, which allows legumes to limit the number of root nodules formed based on available nitrogen and previous rhizobial colonization. This is CLAVATA3/ESR (CLE)-related protein 13 from Medicago truncatula (Barrel medic).